The following is a 399-amino-acid chain: A-type ATP synthase subunit C (399 aa).

This sequence belongs to the V-ATPase V0D/AC39 subunit family. The A-type ATPase is composed of subunits A(3), B(3), C, D, E(1 or 2), F, H(2), I and K(x).

The protein localises to the cell membrane. Functionally, component of the A-type ATP synthase that produces ATP from ADP in the presence of a proton gradient across the membrane. The polypeptide is A-type ATP synthase subunit C (Methanocaldococcus jannaschii (strain ATCC 43067 / DSM 2661 / JAL-1 / JCM 10045 / NBRC 100440) (Methanococcus jannaschii)).